Reading from the N-terminus, the 326-residue chain is MAALFPPPPGPRFVLRGTQSAVNTLHFCPPSQAAGNPLLFSGSQNGLVHIWSLQTRRIVTTLNGHGGQGVIWLKTLPQGHQLLSQGRDLRLCLWDLEEGRNTIMDSVQLDSVGFCRGSILVRGQQCWMLAVPGKGSDEVQILEMPSKTSVCTLKPEADARPGMPMCLGLWQTNSSLRPLLLAGYEDGSVTLWDISERKVCSQITCHEEPVMGLDFDSQKAKGISGSAGKVLAVWSLDDQQSLQVKKTHELTNPGIAEVTIRPDHKILATAGWDHRIRVFHWRTMKPLAVLAFHSAPVYCVAFAADGLLAAGSKDQRISIWSLYPCP.

WD repeat units lie at residues 17-61 (GTQS…IVTT), 64-104 (GHGG…NTIM), 159-202 (ARPG…VCSQ), 205-244 (CHEE…SLQV), 250-291 (LTNP…AVLA), and 292-325 (FHSA…LYPC).

Expressed at low levels in most tissues and highly expressed in adult testis. Widely expressed in adult brain with striking regional distribution in forebrain, midbrain, and hindbrain structures, including the thalamus, hypothalamus, amygdala, hippocampus, pons.

The protein resides in the cytoplasm. Its subcellular location is the nucleus. In terms of biological role, acts as a critical regulator of DNA damage response (DDR) signaling via specifically regulating phosphatidylinositol 3-kinase-related protein kinase (PIKK) family proteins. The chain is Guanine nucleotide-binding protein subunit beta-like protein 1 (Gnb1l) from Mus musculus (Mouse).